Consider the following 612-residue polypeptide: uncharacterized protein (612 aa).

The next 6 helical transmembrane spans lie at 13–33, 38–58, 67–87, 107–127, 144–164, and 189–209; these read IPLTLAVIVFALVMFVLEWLP, AILVAVILMVLGLVTPTEGIA, TIMAMFILSYGITRTGIIQII, GFIVGPSSAFLNNTAIVAIFL, LLIPLSYATILGGMITLLGTS, and LGLLTFSVGLIYIVLAAPILL. RCK C-terminal domains follow at residues 218 to 302 and 316 to 403; these read GNVA…ERGI and NNAG…LLVL. Helical transmembrane passes span 419–439, 459–479, 501–521, 525–545, 546–566, and 586–606; these read AIAIVALVIVIAGLDILPISV, IYGAIRWDVIFLLAGLIPLGT, LSGYALLLLFYLATALLTEIL, ATVVLMLPIAFQVAQSLGLNP, LAFMFVVTFAASNSFMSPIGY, and IGAPLTVILTLATPLLVMLIY.

Belongs to the SLC13A/DASS transporter (TC 2.A.47) family. NADC subfamily.

It is found in the cell membrane. This is an uncharacterized protein from Synechocystis sp. (strain ATCC 27184 / PCC 6803 / Kazusa).